Consider the following 647-residue polypeptide: Threonine--tRNA ligase (647 aa).

A TGS domain is found at 1–63; it reads MEVRVEGQMV…PAGCTGIEPV (63 aa). Residues 244–535 form a catalytic region; the sequence is DHRKLGRELS…LVENFAGALP (292 aa). Residues cysteine 336, histidine 387, and histidine 512 each coordinate Zn(2+).

It belongs to the class-II aminoacyl-tRNA synthetase family. Homodimer. The cofactor is Zn(2+).

It is found in the cytoplasm. The catalysed reaction is tRNA(Thr) + L-threonine + ATP = L-threonyl-tRNA(Thr) + AMP + diphosphate + H(+). Its function is as follows. Catalyzes the attachment of threonine to tRNA(Thr) in a two-step reaction: L-threonine is first activated by ATP to form Thr-AMP and then transferred to the acceptor end of tRNA(Thr). Also edits incorrectly charged L-seryl-tRNA(Thr). The sequence is that of Threonine--tRNA ligase from Desulfovibrio desulfuricans (strain ATCC 27774 / DSM 6949 / MB).